The following is a 274-amino-acid chain: Large ribosomal subunit protein uL2cz/uL2cy (274 aa).

2 disordered regions span residues 1-25 and 223-274; these read MAIH…VKSN and MNPV…RRTK.

It belongs to the universal ribosomal protein uL2 family. As to quaternary structure, part of the 50S ribosomal subunit.

It localises to the plastid. The protein localises to the chloroplast. In Citrus sinensis (Sweet orange), this protein is Large ribosomal subunit protein uL2cz/uL2cy (rpl2-A).